The primary structure comprises 287 residues: Small ribosomal subunit protein uS3 (287 aa).

Residues 38–106 enclose the KH type-2 domain; sequence IRRLLATGLE…QVQLNILEVK (69 aa). Residues 216-287 form a disordered region; that stretch reads AAAPAGADRP…AETTTQNPGS (72 aa). The segment covering 238-287 has biased composition (low complexity); the sequence is SGASGTTATSTDAGRAASGTQEAPAAAEAAAGTEAAAGAAAETTTQNPGS.

Belongs to the universal ribosomal protein uS3 family. As to quaternary structure, part of the 30S ribosomal subunit. Forms a tight complex with proteins S10 and S14.

Binds the lower part of the 30S subunit head. Binds mRNA in the 70S ribosome, positioning it for translation. The protein is Small ribosomal subunit protein uS3 of Mycobacterium sp. (strain JLS).